The sequence spans 225 residues: Ribonuclease HII (225 aa).

The RNase H type-2 domain occupies 28 to 220 (DIIAGTDEVG…VKEYVDISQE (193 aa)). D34, E35, and D129 together coordinate a divalent metal cation.

It belongs to the RNase HII family. Requires Mn(2+) as cofactor. Mg(2+) is required as a cofactor.

It localises to the cytoplasm. The enzyme catalyses Endonucleolytic cleavage to 5'-phosphomonoester.. Its function is as follows. Endonuclease that specifically degrades the RNA of RNA-DNA hybrids. In Desulfotalea psychrophila (strain LSv54 / DSM 12343), this protein is Ribonuclease HII.